The primary structure comprises 96 residues: Large ribosomal subunit protein bL27 (96 aa).

The disordered stretch occupies residues 13 to 33 (KGGGSTANGRNSAGRRLGAKA).

Belongs to the bacterial ribosomal protein bL27 family.

The chain is Large ribosomal subunit protein bL27 from Lactobacillus acidophilus (strain ATCC 700396 / NCK56 / N2 / NCFM).